The sequence spans 391 residues: 3-demethoxyubiquinol 3-hydroxylase (391 aa).

Belongs to the UbiH/COQ6 family. Component of the Ubi complex metabolon, which regroups five ubiquinone biosynthesis proteins (UbiE, UbiF, UbiG, UbiH and UbiI) and two accessory factors (UbiK and the lipid-binding protein UbiJ). FAD is required as a cofactor.

Its subcellular location is the cytoplasm. It catalyses the reaction a 5-methoxy-2-methyl-3-(all-trans-polyprenyl)benzene-1,4-diol + AH2 + O2 = a 3-demethylubiquinol + A + H2O. The protein operates within cofactor biosynthesis; ubiquinone biosynthesis. Catalyzes the hydroxylation of 2-octaprenyl-3-methyl-6-methoxy-1,4-benzoquinol during ubiquinone biosynthesis. The protein is 3-demethoxyubiquinol 3-hydroxylase (ubiF) of Escherichia coli (strain K12).